A 269-amino-acid chain; its full sequence is Formamidopyrimidine-DNA glycosylase (269 aa).

Catalysis depends on proline 2, which acts as the Schiff-base intermediate with DNA. Residue glutamate 3 is the Proton donor of the active site. The Proton donor; for beta-elimination activity role is filled by lysine 57. DNA contacts are provided by histidine 90, arginine 109, and lysine 150. Residues 235–269 form an FPG-type zinc finger; that stretch reads QVYGRKGEPCRVCGTPIVATKHAQRATFYCRQCQK. The active-site Proton donor; for delta-elimination activity is arginine 259.

It belongs to the FPG family. Monomer. Zn(2+) serves as cofactor.

The catalysed reaction is Hydrolysis of DNA containing ring-opened 7-methylguanine residues, releasing 2,6-diamino-4-hydroxy-5-(N-methyl)formamidopyrimidine.. It carries out the reaction 2'-deoxyribonucleotide-(2'-deoxyribose 5'-phosphate)-2'-deoxyribonucleotide-DNA = a 3'-end 2'-deoxyribonucleotide-(2,3-dehydro-2,3-deoxyribose 5'-phosphate)-DNA + a 5'-end 5'-phospho-2'-deoxyribonucleoside-DNA + H(+). Its function is as follows. Involved in base excision repair of DNA damaged by oxidation or by mutagenic agents. Acts as a DNA glycosylase that recognizes and removes damaged bases. Has a preference for oxidized purines, such as 7,8-dihydro-8-oxoguanine (8-oxoG). Has AP (apurinic/apyrimidinic) lyase activity and introduces nicks in the DNA strand. Cleaves the DNA backbone by beta-delta elimination to generate a single-strand break at the site of the removed base with both 3'- and 5'-phosphates. This is Formamidopyrimidine-DNA glycosylase from Escherichia coli O157:H7.